Here is a 170-residue protein sequence, read N- to C-terminus: Cytidine diphosphoramidate kinase (170 aa).

This sequence belongs to the APS kinase family.

The enzyme catalyses cytidine 5'-diphosphoramidate + ATP = cytidine 3'-phospho-5'-diphosphoramidate + ADP + H(+). It participates in capsule biogenesis; capsule polysaccharide biosynthesis. In terms of biological role, involved in the biosynthesis of the O-methyl phosphoramidate (MeOPN) group found on the capsular polysaccharide (CPS) of C.jejuni. Catalyzes the ATP-dependent phosphorylation of cytidine diphosphoramidate (CDP-NH(2)) to form cytidine 3'-phosphate 5'-diphosphoramidate. Can also use other substrates such as the corresponding adenine and uridine diphosphoramidate derivatives or cytidine diphosphoramidate analogs, with lower efficiency. This is Cytidine diphosphoramidate kinase from Campylobacter jejuni subsp. jejuni serotype O:2 (strain ATCC 700819 / NCTC 11168).